We begin with the raw amino-acid sequence, 137 residues long: Protein BNS1 (137 aa).

In terms of biological role, component of the FEAR (CDC14 early anaphase release) network which promotes CDC14 release from the nucleolus during early anaphase and is required for the efficient segregation of telomeric and nucleolar regions. Although BNS1 can partially compensate for a lack of SPO12 function when overexpressed, it does not appear to play any role in controlling meiotic nuclear division. The chain is Protein BNS1 (BNS1) from Saccharomyces cerevisiae (strain ATCC 204508 / S288c) (Baker's yeast).